Consider the following 246-residue polypeptide: PARP-type zinc finger-containing protein C2A9.07c (246 aa).

The PARP-type; degenerate zinc finger occupies 8–99; the sequence is YRVELAKTGR…EKILRAFEQG (92 aa). The span at 103–126 shows a compositional bias: basic and acidic residues; that stretch reads EEDEERCRKMASDASEEKDRKIEE. The interval 103–246 is disordered; the sequence is EEDEERCRKM…ESGNEYSDSD (144 aa). A Phosphothreonine modification is found at T130. S131 bears the Phosphoserine mark. A compositionally biased stretch (basic residues) spans 157-168; that stretch reads NKKHKAERKRSP. Positions 175–184 are enriched in acidic residues; that stretch reads LEDDEEIEDV. The segment covering 185-196 has biased composition (basic and acidic residues); it reads ASDKDEEEKPWS. Positions 197 to 215 are enriched in acidic residues; the sequence is GDEEDDDELVVKDSEDETE. A phosphoserine mark is found at S243 and S245.

It is found in the nucleus. The protein resides in the mitochondrion. This Schizosaccharomyces pombe (strain 972 / ATCC 24843) (Fission yeast) protein is PARP-type zinc finger-containing protein C2A9.07c.